A 519-amino-acid chain; its full sequence is F-box-like/WD repeat-containing protein TBL1XR1-A (519 aa).

The region spanning Ser4–Gln36 is the LisH domain. The F-box-like domain occupies Gly41–Ala86. Positions Ala115–Glu139 are enriched in low complexity. Residues Ala115–Ala147 form a disordered region. WD repeat units lie at residues Gly172–Ser211, Pro228–Leu267, Gln269–Gln308, Phe311–Thr349, Gly352–Asp391, Ala394–Thr442, Lys445–Ser484, and Arg486–Lys519.

It belongs to the WD repeat EBI family. Interacts with heterodimers of rxra and thrb, and this interaction is abrogated by thyroid hormone binding to thrb. Interacts with ncor1.

It is found in the nucleus. In terms of biological role, F-box-like protein which acts as an integral component of the N-CoR transcriptional corepressor complex. Probably regulates transcription activation mediated by nuclear receptors. May mediate the recruitment of the 19S proteasome complex, leading to the subsequent proteasomal degradation of the N-CoR complex, thereby allowing cofactor exchange and transcription activation. The protein is F-box-like/WD repeat-containing protein TBL1XR1-A (tbl1xr1-a) of Xenopus laevis (African clawed frog).